Consider the following 654-residue polypeptide: Integrator complex subunit 9 (654 aa).

7 residues coordinate 1D-myo-inositol hexakisphosphate: Met-1, Arg-2, Thr-18, Phe-19, Arg-504, Lys-508, and Arg-509.

This sequence belongs to the metallo-beta-lactamase superfamily. RNA-metabolizing metallo-beta-lactamase-like family. INTS9 subfamily. In terms of assembly, belongs to the multiprotein complex Integrator, at least composed of IntS1, IntS2, IntS3, IntS4, omd/IntS5, IntS6, defl/IntS7, IntS8, IntS9, IntS10, IntS11, IntS12, asun/IntS13, IntS14 and IntS15. The core complex associates with protein phosphatase 2A subunits mts/PP2A and Pp2A-29B, to form the Integrator-PP2A (INTAC) complex. Within the complex, interacts with IntS1 and IntS12. IntS9 is part of the RNA endonuclease subcomplex, composed of IntS4, IntS9, IntS11 and inositol hexakisphosphate (InsP6).

It is found in the nucleus. The protein localises to the cytoplasm. Its subcellular location is the cytosol. Its function is as follows. Component of the integrator complex, a multiprotein complex that terminates RNA polymerase II (Pol II) transcription in the promoter-proximal region of genes. The integrator complex provides a quality checkpoint during transcription elongation by driving premature transcription termination of transcripts that are unfavorably configured for transcriptional elongation: the complex terminates transcription by (1) catalyzing dephosphorylation of the C-terminal domain (CTD) of Pol II subunit Polr2A/Rbp1 and Spt5, and (2) degrading the exiting nascent RNA transcript via endonuclease activity. The integrator complex is also involved in the 3'-end processing of the U7 snRNA, and also the spliceosomal snRNAs U1, U2, U4 and U5. This chain is Integrator complex subunit 9, found in Drosophila melanogaster (Fruit fly).